The following is a 101-amino-acid chain: Urease subunit beta (101 aa).

Belongs to the urease beta subunit family. Heterotrimer of UreA (gamma), UreB (beta) and UreC (alpha) subunits. Three heterotrimers associate to form the active enzyme.

The protein localises to the cytoplasm. It catalyses the reaction urea + 2 H2O + H(+) = hydrogencarbonate + 2 NH4(+). It functions in the pathway nitrogen metabolism; urea degradation; CO(2) and NH(3) from urea (urease route): step 1/1. The chain is Urease subunit beta from Pseudomonas paraeruginosa (strain DSM 24068 / PA7) (Pseudomonas aeruginosa (strain PA7)).